The chain runs to 234 residues: Chalcone--flavanone isomerase 1 (234 aa).

3 residues coordinate substrate: Thr50, Asn115, and Ser192.

This sequence belongs to the chalcone isomerase family.

The catalysed reaction is a chalcone = a flavanone.. The protein operates within secondary metabolite biosynthesis; flavonoid biosynthesis. Functionally, catalyzes the intramolecular cyclization of bicyclic chalcones into tricyclic (S)-flavanones. Responsible for the isomerization of 4,2',4',6'-tetrahydroxychalcone (also termed chalcone) into naringenin. In Vitis vinifera (Grape), this protein is Chalcone--flavanone isomerase 1 (CHI1).